A 1975-amino-acid chain; its full sequence is Golgi-specific brefeldin A-resistance guanine nucleotide exchange factor 1 homolog (1975 aa).

2 disordered regions span residues 216–243 (NPTEKRQKRKKKRQLSVHIETKAKEPEN) and 299–352 (ISAG…EEKM). Residues 221 to 230 (RQKRKKKRQL) show a composition bias toward basic residues. The 189-residue stretch at 624-812 (QIIEQKKRKR…ADMYQAIKTE (189 aa)) folds into the SEC7 domain. Residues 1264–1277 (QSLRVGGDQQQQRM) are compositionally biased toward polar residues. Disordered regions lie at residues 1264–1318 (QSLR…DLES), 1447–1473 (DEKAVKKHHHHHHGHKKKELCTDVTED), 1699–1751 (IKDT…ATAQ), 1788–1854 (VHSG…QYAY), and 1877–1975 (YANQ…QEKP). Residues 1291-1309 (GAHEERAYTSEGEERRRGG) show a composition bias toward basic and acidic residues. A compositionally biased stretch (basic residues) spans 1451–1464 (VKKHHHHHHGHKKK). Low complexity predominate over residues 1734 to 1751 (SNSTAATSTSDPSIATAQ). Residues 1797–1808 (GSPPQTEPPASS) are compositionally biased toward pro residues. 2 stretches are compositionally biased toward low complexity: residues 1820 to 1854 (YEQYRQQQAAAAQQYQQYNQNYPQQQQQQQQQYAY) and 1877 to 1894 (YANQYQHYQQQQQQQQQH). Polar residues predominate over residues 1895-1909 (PVNPTSPSVHGQYSV). Low complexity predominate over residues 1938-1957 (TPPQNNAPALAPSAPTTTSA).

The protein localises to the golgi apparatus. The protein resides in the cis-Golgi network. Its subcellular location is the endoplasmic reticulum-Golgi intermediate compartment. Guanine-nucleotide exchange factor (GEF) for members of the Arf family of small GTPases involved in trafficking in the early secretory pathway; its GEF activity initiates the coating of nascent vesicles via the localized generation of activated ARFs through replacement of GDP with GTP. Also, plays a role in receptor-mediated endocytosis in oocytes and endosomal trafficking. Involved in vesicle retrograde transport from the ERGIC and cis-Golgi compartments to the endoplasmic reticulum (ER). Plays a role in maintaining mitochondrial morphology, network organization and function. May be required for the basolateral cell membrane localization of the serine threonine protein kinase sgk-1 in intestinal cells. The chain is Golgi-specific brefeldin A-resistance guanine nucleotide exchange factor 1 homolog from Caenorhabditis elegans.